The chain runs to 197 residues: RNA chaperone ProQ (197 aa).

The tract at residues 115 to 138 is disordered; it reads RAAAKKAQQKKHPRKPANKNLKKE. Basic residues predominate over residues 117-131; sequence AAKKAQQKKHPRKPA.

The protein belongs to the ProQ family.

The protein localises to the cytoplasm. Its function is as follows. RNA chaperone with significant RNA binding, RNA strand exchange and RNA duplexing activities. This is RNA chaperone ProQ from Haemophilus influenzae (strain ATCC 51907 / DSM 11121 / KW20 / Rd).